Reading from the N-terminus, the 519-residue chain is Asteroid homolog 1 (519 aa).

This sequence belongs to the asteroid family.

It localises to the cytoplasm. The protein localises to the mitochondrion. This Schizosaccharomyces pombe (strain 972 / ATCC 24843) (Fission yeast) protein is Asteroid homolog 1 (ast1).